Consider the following 307-residue polypeptide: MTTGLSTAGAQDIGRSSVRPYLEECTRRFQEMFDRHVVTRPTKVELTDAELREVIDDCNAAVAPLGKTVSDERWISYVGVVLWSQSPRHIKDMEAFKAVCVLNCVTFVWDDMDPALHDFGLFLPQLRKICEKYYGPEDAEVAYEAARAFVTSDHMFRDSPIKAALCTTSPEQYFRFRVTDIGVDFWMKMSYPIYRHPEFTEHAKTSLAARMTTRGLTIVNDFYSYDREVSLGQITNCFRLCDVSDETAFKEFFQARLDDMIEDIECIKAFDQLTQDVFLDLIYGNFVWTTSNKRYKTAVNDVNSRIQ.

Mg(2+) contacts are provided by aspartate 110, asparagine 220, serine 224, and glutamate 228. The short motif at 110-113 (DDMD) is the DDXXD motif; degenerate element. The short motif at 220 to 228 (NDFYSYDRE) is the NSE/DTE motif element.

Belongs to the terpene synthase family. In terms of assembly, homodimer. Mg(2+) serves as cofactor.

The enzyme catalyses geranylgeranyl diphosphate + H2O = cyclooctat-9-en-7-ol + diphosphate. Catalyzes the cyclization of the linear isoprenoid intermediate geranylgeranyl diphosphate to tricycclic cyclooctat-9-en-7-ol in the cyclooctatin biosynthesis pathway. Cyclooctatin is a potent inhibitor of lysophospholipase. This is Cyclooctat-9-en-7-ol synthase from Streptomyces melanosporofaciens.